Consider the following 481-residue polypeptide: Proline--tRNA ligase (481 aa).

The protein belongs to the class-II aminoacyl-tRNA synthetase family. ProS type 3 subfamily. In terms of assembly, homodimer.

It localises to the cytoplasm. It catalyses the reaction tRNA(Pro) + L-proline + ATP = L-prolyl-tRNA(Pro) + AMP + diphosphate. Catalyzes the attachment of proline to tRNA(Pro) in a two-step reaction: proline is first activated by ATP to form Pro-AMP and then transferred to the acceptor end of tRNA(Pro). The chain is Proline--tRNA ligase from Pelodictyon phaeoclathratiforme (strain DSM 5477 / BU-1).